The primary structure comprises 485 residues: Glutamyl-tRNA(Gln) amidotransferase subunit A (485 aa).

Active-site charge relay system residues include K79 and S154. S178 (acyl-ester intermediate) is an active-site residue.

It belongs to the amidase family. GatA subfamily. In terms of assembly, heterotrimer of A, B and C subunits.

It catalyses the reaction L-glutamyl-tRNA(Gln) + L-glutamine + ATP + H2O = L-glutaminyl-tRNA(Gln) + L-glutamate + ADP + phosphate + H(+). In terms of biological role, allows the formation of correctly charged Gln-tRNA(Gln) through the transamidation of misacylated Glu-tRNA(Gln) in organisms which lack glutaminyl-tRNA synthetase. The reaction takes place in the presence of glutamine and ATP through an activated gamma-phospho-Glu-tRNA(Gln). This Geobacillus kaustophilus (strain HTA426) protein is Glutamyl-tRNA(Gln) amidotransferase subunit A.